The chain runs to 385 residues: Histidinol-phosphate aminotransferase (385 aa).

The residue at position 230 (K230) is an N6-(pyridoxal phosphate)lysine.

It belongs to the class-II pyridoxal-phosphate-dependent aminotransferase family. The cofactor is pyridoxal 5'-phosphate.

It carries out the reaction L-histidinol phosphate + 2-oxoglutarate = 3-(imidazol-4-yl)-2-oxopropyl phosphate + L-glutamate. Its pathway is amino-acid biosynthesis; L-histidine biosynthesis; L-histidine from 5-phospho-alpha-D-ribose 1-diphosphate: step 7/9. This chain is Histidinol-phosphate aminotransferase, found in Saccharomyces cerevisiae (strain ATCC 204508 / S288c) (Baker's yeast).